The chain runs to 519 residues: 2,3-bisphosphoglycerate-independent phosphoglycerate mutase (519 aa).

Residues Asp-18 and Ser-68 each contribute to the Mn(2+) site. The Phosphoserine intermediate role is filled by Ser-68. Substrate contacts are provided by residues His-129, 159–160, Arg-191, Arg-197, 267–270, and Lys-341; these read RD and RADR. Mn(2+) is bound by residues Asp-408, His-412, Asp-449, His-450, and His-468.

Belongs to the BPG-independent phosphoglycerate mutase family. As to quaternary structure, monomer. Requires Mn(2+) as cofactor.

It carries out the reaction (2R)-2-phosphoglycerate = (2R)-3-phosphoglycerate. It functions in the pathway carbohydrate degradation; glycolysis; pyruvate from D-glyceraldehyde 3-phosphate: step 3/5. Functionally, catalyzes the interconversion of 2-phosphoglycerate and 3-phosphoglycerate. In Coxiella burnetii (strain RSA 331 / Henzerling II), this protein is 2,3-bisphosphoglycerate-independent phosphoglycerate mutase.